Consider the following 154-residue polypeptide: Endoribonuclease YbeY (154 aa).

Zn(2+) contacts are provided by His-113, His-117, and His-123.

Belongs to the endoribonuclease YbeY family. It depends on Zn(2+) as a cofactor.

The protein resides in the cytoplasm. Functionally, single strand-specific metallo-endoribonuclease involved in late-stage 70S ribosome quality control and in maturation of the 3' terminus of the 16S rRNA. The sequence is that of Endoribonuclease YbeY from Vibrio cholerae serotype O1 (strain ATCC 39315 / El Tor Inaba N16961).